The chain runs to 118 residues: Large ribosomal subunit protein bL20 (118 aa).

Belongs to the bacterial ribosomal protein bL20 family.

Functionally, binds directly to 23S ribosomal RNA and is necessary for the in vitro assembly process of the 50S ribosomal subunit. It is not involved in the protein synthesizing functions of that subunit. This chain is Large ribosomal subunit protein bL20, found in Cupriavidus metallidurans (strain ATCC 43123 / DSM 2839 / NBRC 102507 / CH34) (Ralstonia metallidurans).